A 131-amino-acid polypeptide reads, in one-letter code: Large ribosomal subunit protein bL17 (131 aa).

Belongs to the bacterial ribosomal protein bL17 family. As to quaternary structure, part of the 50S ribosomal subunit. Contacts protein L32.

In Methylibium petroleiphilum (strain ATCC BAA-1232 / LMG 22953 / PM1), this protein is Large ribosomal subunit protein bL17.